Consider the following 223-residue polypeptide: ATP phosphoribosyltransferase (223 aa).

This sequence belongs to the ATP phosphoribosyltransferase family. Short subfamily. In terms of assembly, heteromultimer composed of HisG and HisZ subunits.

The protein localises to the cytoplasm. The enzyme catalyses 1-(5-phospho-beta-D-ribosyl)-ATP + diphosphate = 5-phospho-alpha-D-ribose 1-diphosphate + ATP. Its pathway is amino-acid biosynthesis; L-histidine biosynthesis; L-histidine from 5-phospho-alpha-D-ribose 1-diphosphate: step 1/9. Functionally, catalyzes the condensation of ATP and 5-phosphoribose 1-diphosphate to form N'-(5'-phosphoribosyl)-ATP (PR-ATP). Has a crucial role in the pathway because the rate of histidine biosynthesis seems to be controlled primarily by regulation of HisG enzymatic activity. The protein is ATP phosphoribosyltransferase of Desulfitobacterium hafniense (strain Y51).